A 142-amino-acid polypeptide reads, in one-letter code: Large ribosomal subunit protein uL16 (142 aa).

It belongs to the universal ribosomal protein uL16 family. Part of the 50S ribosomal subunit.

Binds 23S rRNA and is also seen to make contacts with the A and possibly P site tRNAs. The protein is Large ribosomal subunit protein uL16 of Aquifex aeolicus (strain VF5).